Here is a 101-residue protein sequence, read N- to C-terminus: MAKTSAVEKNNRRRKMADRYANKRAALKAIVMDQGKPMEERFKAQLQLAALPRNSSKTRIRNRCEVTGRPRAFYRKLKMSRIALRELGSQGLIPGLVKSSW.

It belongs to the universal ribosomal protein uS14 family. In terms of assembly, part of the 30S ribosomal subunit. Contacts proteins S3 and S10.

Binds 16S rRNA, required for the assembly of 30S particles and may also be responsible for determining the conformation of the 16S rRNA at the A site. The chain is Small ribosomal subunit protein uS14 from Chelativorans sp. (strain BNC1).